Consider the following 200-residue polypeptide: Golgi to ER traffic protein 1 (200 aa).

Residues 1 to 6 (MEPYTL) lie on the Lumenal side of the membrane. A helical membrane pass occupies residues 7 to 26 (LLFIFVIQIVKQIISAVGKQ). The Cytoplasmic portion of the chain corresponds to 27-113 (SIESISWVLY…KVNTFTGYLI (87 aa)). Positions 75-107 (AKWTKLNRQHDKLVAEIEQLQKEVDLDKVKVNT) form a coiled coil. The chain crosses the membrane as a helical span at residues 114–134 (AILTSIPIWFFRVWYRSVVLF). The Lumenal portion of the chain corresponds to 135-158 (YFPPGILPRALEWSIALPFTVTGG). The helical transmembrane segment at 159–175 (VSLTVWMMAAGAVASSL) threads the bilayer. Residues 176–200 (TFLFMFPFEKAVPKPVLAKKSPQQL) lie on the Cytoplasmic side of the membrane.

Belongs to the WRB/GET1 family. In terms of assembly, component of the Golgi to ER traffic (GET) complex, which is composed of GET1, GET2 and GET3. Within the complex, GET1 and GET2 form a heterotetramer which is stabilized by phosphatidylinositol binding and which binds to the GET3 homodimer.

It is found in the endoplasmic reticulum membrane. The protein resides in the golgi apparatus membrane. Required for the post-translational delivery of tail-anchored (TA) proteins to the endoplasmic reticulum. Together with GET2, acts as a membrane receptor for soluble GET3, which recognizes and selectively binds the transmembrane domain of TA proteins in the cytosol. The GET complex cooperates with the HDEL receptor ERD2 to mediate the ATP-dependent retrieval of resident ER proteins that contain a C-terminal H-D-E-L retention signal from the Golgi to the ER. This is Golgi to ER traffic protein 1 from Meyerozyma guilliermondii (strain ATCC 6260 / CBS 566 / DSM 6381 / JCM 1539 / NBRC 10279 / NRRL Y-324) (Yeast).